Reading from the N-terminus, the 198-residue chain is NAD(P)H dehydrogenase (quinone) (198 aa).

A Flavodoxin-like domain is found at 4–189; the sequence is ILVLYYSMYG…SIARYQGEYV (186 aa). FMN-binding positions include 10–15 and 78–80; these read SMYGHI and TRF. Position 12 (tyrosine 12) interacts with NAD(+). Position 98 (tryptophan 98) interacts with substrate. FMN contacts are provided by residues 113–118 and histidine 133; that span reads STGTGG.

Belongs to the WrbA family. Requires FMN as cofactor.

The enzyme catalyses a quinone + NADH + H(+) = a quinol + NAD(+). It carries out the reaction a quinone + NADPH + H(+) = a quinol + NADP(+). In Salmonella paratyphi C (strain RKS4594), this protein is NAD(P)H dehydrogenase (quinone).